Here is a 256-residue protein sequence, read N- to C-terminus: Non-specific lipid transfer protein GPI-anchored 23 (256 aa).

The first 21 residues, 1–21 (MKPSFVLLSIVLLLSSSLSDA), serve as a signal peptide directing secretion. Asparagine 41 carries an N-linked (GlcNAc...) asparagine glycan. 4 disulfides stabilise this stretch: cysteine 45-cysteine 88, cysteine 55-cysteine 72, cysteine 73-cysteine 113, and cysteine 86-cysteine 121. Residues 125-230 (TPAASTPVSP…SPSPSPSPSI (106 aa)) are disordered. Low complexity predominate over residues 138–230 (SPTTSPSSAK…SPSPSPSPSI (93 aa)). A lipid anchor (GPI-anchor amidated serine) is attached at serine 225. Residues 226–256 (PSPSISSSGILLVSKLFIAVVMVSSFLYILA) constitute a propeptide, removed in mature form.

This sequence belongs to the plant LTP family. In terms of tissue distribution, confined to the anthers of the inflorescence.

It localises to the cell membrane. Functionally, probable lipid transfer protein. The chain is Non-specific lipid transfer protein GPI-anchored 23 from Arabidopsis thaliana (Mouse-ear cress).